The following is a 100-amino-acid chain: Urease subunit gamma (100 aa).

This sequence belongs to the urease gamma subunit family. As to quaternary structure, heterotrimer of UreA (gamma), UreB (beta) and UreC (alpha) subunits. Three heterotrimers associate to form the active enzyme.

It localises to the cytoplasm. The catalysed reaction is urea + 2 H2O + H(+) = hydrogencarbonate + 2 NH4(+). It participates in nitrogen metabolism; urea degradation; CO(2) and NH(3) from urea (urease route): step 1/1. The chain is Urease subunit gamma from Chromohalobacter salexigens (strain ATCC BAA-138 / DSM 3043 / CIP 106854 / NCIMB 13768 / 1H11).